A 98-amino-acid chain; its full sequence is Large ribosomal subunit protein bL27 (98 aa).

Residues 1–9 (MLKMNLQLF) constitute a propeptide that is removed on maturation.

The protein belongs to the bacterial ribosomal protein bL27 family. Post-translationally, the N-terminus is cleaved by ribosomal processing cysteine protease Prp.

The sequence is that of Large ribosomal subunit protein bL27 from Desulfitobacterium hafniense (strain DSM 10664 / DCB-2).